Reading from the N-terminus, the 320-residue chain is mRNA decay activator protein ZFP36 (320 aa).

Positions 1-15 are necessary for nuclear export; sequence MDLSAIYESLMSMSH. A necessary and sufficient for the association with mRNA decay enzymes and mRNA decay activation region spans residues 1 to 93; it reads MDLSAIYESL…PTSPTATPTT (93 aa). Necessary for localization of ARE-containing mRNAs to processing bodies (PBs) regions lie at residues 1 to 167 and 93 to 320; these read MDLS…DLAL and TSSR…SVSE. The tract at residues 17 to 50 is disordered; that stretch reads LSPDHGGTESSGGLWNINSSDSIPSGVTSRLTGR. Polar residues predominate over residues 27-50; sequence SGGLWNINSSDSIPSGVTSRLTGR. Position 53 is a phosphoserine; by MAPKAPK2 (Ser53). The residue at position 59 (Ser59) is a Phosphoserine. One copy of the P-P-P-P-G repeat lies at 64–68; the sequence is PPPPG. Positions 66-85 are enriched in pro residues; that stretch reads PPGFAPLAPRPGPELSPSPT. Positions 66-95 are disordered; it reads PPGFAPLAPRPGPELSPSPTSPTATPTTSS. Phosphoserine is present on residues Ser81 and Ser83. Thr85 carries the post-translational modification Phosphothreonine. Residue Ser86 is modified to Phosphoserine. The segment covering 86-95 has biased composition (low complexity); it reads SPTATPTTSS. The interval 88 to 161 is necessary for nuclear localization; sequence TATPTTSSRY…GSRCHFIHNP (74 aa). The interval 90-166 is necessary for RNA-binding; the sequence is TPTTSSRYKT…FIHNPTEDLA (77 aa). 2 consecutive C3H1-type zinc fingers follow at residues 96 to 124 and 134 to 162; these read RYKTELCRTYSESGRCRYGAKCQFAHGPG and KYKTELCHKFYLQGRCPYGSRCHFIHNPT. Positions 96-187 are necessary for interaction with PABPN1; sequence RYKTELCRTY…ISFSGLPSGR (92 aa). The interval 167-320 is necessary for mRNA decay activation; the sequence is LPGQPHVLRQ…PIFNRISVSE (154 aa). Ser179 carries the post-translational modification Phosphoserine; by MAPKAPK2. The disordered stretch occupies residues 180–310; that stretch reads FSGLPSGRRT…PQPPAPPRRL (131 aa). The residue at position 190 (Ser190) is a Phosphoserine. Residues 191–195 form a P-P-P-P-G repeat; sequence PPPPG. The segment covering 197 to 209 has biased composition (low complexity); the sequence is SGPSLSSCSFSPS. Ser211 carries the phosphoserine modification. Residues 212–216 form a P-P-P-P-G repeat; that stretch reads PPPPG. Ser221 is subject to Phosphoserine; by MAPK1; in vitro. Thr251 is subject to Phosphothreonine. Residues Ser270 and Ser290 each carry the phosphoserine modification. Residues 280–290 show a composition bias toward low complexity; the sequence is SSGSSLGGSDS. The span at 300–309 shows a compositional bias: pro residues; sequence PPQPPAPPRR. An interaction with CNOT1 region spans residues 306–320; that stretch reads PPRRLPIFNRISVSE. Ser317 is modified (phosphoserine).

Associates with cytoplasmic CCR4-NOT and PAN2-PAN3 deadenylase complexes to trigger ARE-containing mRNA deadenylation and decay processes. Part of a mRNA decay activation complex at least composed of poly(A)-specific exoribonucleases CNOT6, EXOSC2 and XRN1 and mRNA-decapping enzymes DCP1A and DCP2. Associates with the RNA exosome complex. Interacts (via phosphorylated form) with 14-3-3 proteins; these interactions promote exclusion of ZFP36 from cytoplasmic stress granules in response to arsenite treatment in a MAPKAPK2-dependent manner and does not prevent CCR4-NOT deadenylase complex recruitment or ZFP36-induced ARE-containing mRNA deadenylation and decay processes. Interacts with 14-3-3 proteins; these interactions occur in response to rapamycin in an Akt-dependent manner. Interacts with AGO2 and AGO4. Interacts (via C-terminus) with CNOT1; this interaction occurs in a RNA-independent manner and induces mRNA deadenylation. Interacts (via N-terminus) with CNOT6. Interacts with CNOT6L. Interacts (via C-terminus) with CNOT7; this interaction occurs in a RNA-independent manner, induces mRNA deadenylation and is inhibited in a phosphorylation MAPKAPK2-dependent manner. Interacts (via unphosphorylated form) with CNOT8; this interaction occurs in a RNA-independent manner and is inhibited in a phosphorylation MAPKAPK2-dependent manner. Interacts with DCP1A. Interacts (via N-terminus) with DCP2. Interacts with EDC3. Interacts (via N-terminus) with EXOSC2. Interacts with heat shock 70 kDa proteins. Interacts with KHSRP; this interaction increases upon cytokine-induced treatment. Interacts with MAP3K4; this interaction enhances the association with SH3KBP1/CIN85. Interacts with MAPKAPK2; this interaction occurs upon skeletal muscle satellite cell activation. Interacts with NCL. Interacts with NUP214; this interaction increases upon lipopolysaccharide (LPS) stimulation. Interacts with PABPC1; this interaction occurs in a RNA-dependent manner. Interacts (via hypophosphorylated form) with PABPN1 (via RRM domain and C-terminal arginine-rich region); this interaction occurs in the nucleus in a RNA-independent manner, decreases in presence of single-stranded poly(A) RNA-oligomer and in a p38 MAPK-dependent-manner and inhibits nuclear poly(A) tail synthesis. Interacts with PAN2. Interacts (via C3H1-type zinc finger domains) with PKM. Interacts (via C3H1-type zinc finger domains) with nuclear RNA poly(A) polymerase. Interacts with PPP2CA; this interaction occurs in LPS-stimulated cells and induces ZFP36 dephosphorylation, and hence may promote ARE-containing mRNAs decay. Interacts (via C-terminus) with PRR5L (via C-terminus); this interaction may accelerate ZFP36-mediated mRNA decay during stress. Interacts (via C-terminus) with SFN; this interaction occurs in a phosphorylation-dependent manner. Interacts (via extreme C-terminal region) with SH3KBP1/CIN85 (via SH3 domains); this interaction enhances MAP3K4-induced phosphorylation of ZFP36 at Ser-59 and Ser-86 and does not alter neither ZFP36 binding to ARE-containing transcripts nor TNF-alpha mRNA decay. Interacts with XRN1. Interacts (via C-terminus and Ser-179 phosphorylated form) with YWHAB; this interaction occurs in a p38/MAPKAPK2-dependent manner, increases cytoplasmic localization of ZFP36 and protects ZFP36 from Ser-179 dephosphorylation by serine/threonine phosphatase 2A, and hence may be crucial for stabilizing ARE-containing mRNAs. Interacts (via phosphorylated form) with YWHAE. Interacts (via C-terminus) with YWHAG; this interaction occurs in a phosphorylation-dependent manner. Interacts with YWHAH; this interaction occurs in a phosphorylation-dependent manner. Interacts with YWHAQ; this interaction occurs in a phosphorylation-dependent manner. Interacts with (via C-terminus) YWHAZ; this interaction occurs in a phosphorylation-dependent manner. Does not interact with SH3KBP1. Interacts (via P-P-P-P-G repeats) with GIGYF2; the interaction is direct. In terms of processing, phosphorylated. Phosphorylation at serine and/or threonine residues occurs in a p38 MAPK- and MAPKAPK2-dependent manner. Phosphorylated by MAPKAPK2 at Ser-53 and Ser-179; phosphorylation increases its stability and cytoplasmic localization, promotes binding to 14-3-3 adapter proteins and inhibits the recruitment of cytoplasmic CCR4-NOT and PAN2-PAN3 deadenylase complexes to the mRNA decay machinery, thereby inhibiting ZFP36-induced ARE-containing mRNA deadenylation and decay processes. Phosphorylation by MAPKAPK2 does not impair ARE-containing RNA-binding. Phosphorylated in a MAPKAPK2- and p38 MAPK-dependent manner upon skeletal muscle satellite cell activation; this phosphorylation inhibits ZFP36-mediated mRNA decay activity, and hence stabilizes MYOD1 mRNA. Phosphorylated by MAPK1 upon mitogen stimulation. Phosphorylated at Ser-59 and Ser-86; these phosphorylations increase in a SH3KBP1-dependent manner. Phosphorylated at serine and threonine residues in a pyruvate kinase PKM- and p38 MAPK-dependent manner. Phosphorylation at Ser-53 may participate in the PKM-mediated degradation of ZFP36 in a p38 MAPK-dependent manner. Dephosphorylated by serine/threonine phosphatase 2A at Ser-179. Post-translationally, ubiquitinated; pyruvate kinase (PKM)-dependent ubiquitination leads to proteasomal degradation through a p38 MAPK signaling pathway.

Its subcellular location is the nucleus. The protein localises to the cytoplasm. It is found in the cytoplasmic granule. It localises to the P-body. Its function is as follows. Zinc-finger RNA-binding protein that destabilizes numerous cytoplasmic AU-rich element (ARE)-containing mRNA transcripts by promoting their poly(A) tail removal or deadenylation, and hence provide a mechanism for attenuating protein synthesis. Acts as an 3'-untranslated region (UTR) ARE mRNA-binding adapter protein to communicate signaling events to the mRNA decay machinery. Recruits deadenylase CNOT7 (and probably the CCR4-NOT complex) via association with CNOT1, and hence promotes ARE-mediated mRNA deadenylation. Also functions by recruiting components of the cytoplasmic RNA decay machinery to the bound ARE-containing mRNAs. Self regulates by destabilizing its own mRNA. Binds to 3'-UTR ARE of numerous mRNAs. Also binds to ARE of its own mRNA. Plays a role in anti-inflammatory responses; suppresses tumor necrosis factor (TNF)-alpha production by stimulating ARE-mediated TNF-alpha mRNA decay and several other inflammatory ARE-containing mRNAs in interferon (IFN)- and/or lipopolysaccharide (LPS)-induced macrophages. Also plays a role in the regulation of dendritic cell maturation at the post-transcriptional level, and hence operates as part of a negative feedback loop to limit the inflammatory response. Promotes ARE-mediated mRNA decay of hypoxia-inducible factor HIF1A mRNA during the response of endothelial cells to hypoxia. Positively regulates early adipogenesis of preadipocytes by promoting ARE-mediated mRNA decay of immediate early genes (IEGs). Negatively regulates hematopoietic/erythroid cell differentiation by promoting ARE-mediated mRNA decay of the transcription factor STAT5B mRNA. Plays a role in maintaining skeletal muscle satellite cell quiescence by promoting ARE-mediated mRNA decay of the myogenic determination factor MYOD1 mRNA. Also associates with and regulates the expression of non-ARE-containing target mRNAs at the post-transcriptional level, such as MHC class I mRNAs. Participates in association with argonaute RISC catalytic components in the ARE-mediated mRNA decay mechanism; assists microRNA (miRNA) targeting ARE-containing mRNAs. May also play a role in the regulation of cytoplasmic mRNA decapping; enhances decapping of ARE-containing RNAs, in vitro. Involved in the delivery of target ARE-mRNAs to processing bodies (PBs). In addition to its cytosolic mRNA-decay function, affects nuclear pre-mRNA processing. Negatively regulates nuclear poly(A)-binding protein PABPN1-stimulated polyadenylation activity on ARE-containing pre-mRNA during LPS-stimulated macrophages. Also involved in the regulation of stress granule (SG) and P-body (PB) formation and fusion. Plays a role in the regulation of keratinocyte proliferation, differentiation and apoptosis. Plays a role as a tumor suppressor by inhibiting cell proliferation in breast cancer cells. This chain is mRNA decay activator protein ZFP36, found in Rattus norvegicus (Rat).